The chain runs to 269 residues: uncharacterized protein (269 aa).

The RPE1 insert domain occupies 152-197 (RYFSKPAYRNAFKANTIRATTAYKKVFNDPSLGSTYPLEVPLGKMS).

This is an uncharacterized protein from Rickettsia prowazekii (strain Madrid E).